The chain runs to 312 residues: Protein-methionine-sulfoxide reductase catalytic subunit MsrP (312 aa).

Positions 1–42 form a signal peptide, tat-type signal; sequence MALFRYPRPLPSEITPRDMYLSRRSLIGGAAALGAVSATADA. Residues asparagine 68, 71–72, cysteine 126, serine 161, asparagine 211, arginine 216, and 227–229 contribute to the Mo-molybdopterin site; these read YE and GIK.

The protein belongs to the MsrP family. As to quaternary structure, heterodimer of a catalytic subunit (MsrP) and a heme-binding subunit (MsrQ). Mo-molybdopterin serves as cofactor. In terms of processing, predicted to be exported by the Tat system. The position of the signal peptide cleavage has not been experimentally proven.

The protein resides in the periplasm. The catalysed reaction is L-methionyl-[protein] + a quinone + H2O = L-methionyl-(S)-S-oxide-[protein] + a quinol. It carries out the reaction L-methionyl-[protein] + a quinone + H2O = L-methionyl-(R)-S-oxide-[protein] + a quinol. In terms of biological role, part of the MsrPQ system that repairs oxidized periplasmic proteins containing methionine sulfoxide residues (Met-O), using respiratory chain electrons. Thus protects these proteins from oxidative-stress damage caused by reactive species of oxygen and chlorine generated by the host defense mechanisms. MsrPQ is essential for the maintenance of envelope integrity under bleach stress, rescuing a wide series of structurally unrelated periplasmic proteins from methionine oxidation. The catalytic subunit MsrP is non-stereospecific, being able to reduce both (R-) and (S-) diastereoisomers of methionine sulfoxide. The protein is Protein-methionine-sulfoxide reductase catalytic subunit MsrP of Gluconobacter oxydans (strain 621H) (Gluconobacter suboxydans).